Here is a 179-residue protein sequence, read N- to C-terminus: Large ribosomal subunit protein uL5 (179 aa).

The protein belongs to the universal ribosomal protein uL5 family. In terms of assembly, part of the 50S ribosomal subunit; part of the 5S rRNA/L5/L18/L25 subcomplex. Contacts the 5S rRNA and the P site tRNA. Forms a bridge to the 30S subunit in the 70S ribosome.

This is one of the proteins that bind and probably mediate the attachment of the 5S RNA into the large ribosomal subunit, where it forms part of the central protuberance. In the 70S ribosome it contacts protein S13 of the 30S subunit (bridge B1b), connecting the 2 subunits; this bridge is implicated in subunit movement. Contacts the P site tRNA; the 5S rRNA and some of its associated proteins might help stabilize positioning of ribosome-bound tRNAs. This chain is Large ribosomal subunit protein uL5, found in Dehalococcoides mccartyi (strain ATCC BAA-2266 / KCTC 15142 / 195) (Dehalococcoides ethenogenes (strain 195)).